Consider the following 758-residue polypeptide: Thiosulfate reductase molybdopterin-containing subunit PhsA (758 aa).

A signal peptide (tat-type signal) is located at residues 1-30 (MSISRRSFLQGVGIGCSACALGAFPPGALA). The 4Fe-4S Mo/W bis-MGD-type domain occupies 41–97 (TTLTPSLCEMCSFRCPIQAQVVNNKTVFIQGNPSAPQQGTRICARGGSGVSLVNDPQ). Residues C48, C51, C55, and C83 each coordinate [4Fe-4S] cluster.

Belongs to the prokaryotic molybdopterin-containing oxidoreductase family. In terms of assembly, composed of three subunits: PhsA, PhsB and PhsC. The cofactor is [4Fe-4S] cluster. Requires Mo-bis(molybdopterin guanine dinucleotide) as cofactor. In terms of processing, predicted to be exported by the Tat system. The position of the signal peptide cleavage has not been experimentally proven.

Its subcellular location is the periplasm. The catalysed reaction is a quinone + hydrogen sulfide + sulfite + 2 H(+) = thiosulfate + a quinol. Component of the PhsABC thiosulfate reductase that catalyzes the reduction of thiosulfate to sulfite and hydrogen sulfide, with menaquinol as the sole electron donor. Proton motive force (PMF) is required to drive transmembrane electron transfer within the reductase. The PhsA subunit contains the active site molybdenum-bis(molybdopterin guanine dinucleotide) (Mo-bis-MGD) cofactor. This is Thiosulfate reductase molybdopterin-containing subunit PhsA from Salmonella typhimurium (strain LT2 / SGSC1412 / ATCC 700720).